Consider the following 778-residue polypeptide: MSWNRRSFLGALGVTCLAGAGMVPIVRPRTAAAADEFDLLRERWCSLVTGSGYDPDVEPFKSRLAALGAEAEQYLTTLAPGETSLWPDLPLDTSTWNMTLSARRLRTMAVAYLVPGTGHTGNSAMAEAAVTAFDELTTRFYAPPHWWGNWWDWLIGTPQALNDFCALLYEQLGPELIDRYVQRVDHYVDPGAIDRTTGANRGWLCEVTAVRGVLGKSPEMMAKARDGLSPIMVYVTDGDGFYRDGSFIQHEYYAYTGSYGISLLQSVSGLFALLAGSTWEIVDPNRQVLFDSIENSFAPFVYNGLLMDAVAGRVISREAEHDHWRGHLLAASVLRMAEAGSPEEAKRWRGIVKGWLLRESEPRYMGDQTLTMAAVADAQAVLDDPTIEPLPEPVEHRIFAAMDQAVHRRPTWAFSISMRSVRTAFYETINGENLKGWHTGVGMTYWWGADFGNDHYTDGFWPTADPYRLPGTTVSRKPLEDGVGNNVLPTEAWAGGTTDGEFAAVGQSIQALESTLRGRKSWFCLDDAVVCLGAGITCADGYAVDTTVDQRNLGENGVHDFRLNGIPSPTSGTWSLTVPNARWAHLEGFGGYVFPGGARVSAIRETRTGSWYDINVGGPRDELRRRYVTVYLDHGVDPVDASYVYLVMPGATRQETIRRAADRRWLRVLANTADRQAISVPSLGFVGANFFAPGTVDALTVDQPCSVLVRVADGRATICVSDPRQDGSTVRVTWNRPVASVVSSDPTVRVVEAGERLVLDVTVEETAGMTQRAVVALA.

The segment at residues 1–33 is a signal peptide (tat-type signal); sequence MSWNRRSFLGALGVTCLAGAGMVPIVRPRTAAA. Residues Asn200, His250, and Tyr259 contribute to the active site.

The protein belongs to the polysaccharide lyase 8 family. Post-translationally, predicted to be exported by the Tat system. The position of the signal peptide cleavage has not been experimentally proven.

The enzyme catalyses [hyaluronan](n) = n 3-(4-deoxy-beta-D-gluc-4-enuronosyl)-N-acetyl-D-glucosamine + H2O. Is salt-dependent and is active over a wide range of NaCl concentrations. Activity is slightly promoted by Ni(2+), and inhibited by most of the tested metal ions, including Li(+), K(+), Ba(2+), Mg(2+), Zn(2+), Ca(2+), Mn(2+) and Al(3+). Degrades hyaluronic acid into unsaturated disaccharides as the end products. Exhibits very low activity against various types of chondroitin sulfate variants. The protein is Hyaluronate lyase of Thermasporomyces composti.